Reading from the N-terminus, the 244-residue chain is EEF1A lysine methyltransferase 2 (244 aa).

Residues 1–27 (MNADAEGHSGAVVPAQSPEGSSAADDF) are disordered. Ser-21 is modified (phosphoserine).

This sequence belongs to the class I-like SAM-binding methyltransferase superfamily. EFM4 family.

It localises to the cytoplasm. Its subcellular location is the nucleus. The enzyme catalyses L-lysyl-[protein] + 3 S-adenosyl-L-methionine = N(6),N(6),N(6)-trimethyl-L-lysyl-[protein] + 3 S-adenosyl-L-homocysteine + 3 H(+). Protein-lysine methyltransferase that selectively catalyzes the trimethylation of EEF1A at 'Lys-318'. The polypeptide is EEF1A lysine methyltransferase 2 (Mus musculus (Mouse)).